The chain runs to 363 residues: Sensor protein BasS (363 aa).

The Cytoplasmic portion of the chain corresponds to 1–13; sequence MHFLRRPISLRQR. A helical membrane pass occupies residues 14–34; sequence LILTIGAILLVFELISVFWLW. Residues 35–64 are Periplasmic-facing; that stretch reads HESTEQIQLFEQALRDNRNNDRHIMREIRE. The chain crosses the membrane as a helical span at residues 65-88; the sequence is AVASLIVPGVFMVSLTLFICYQAV. The 53-residue stretch at 89 to 141 folds into the HAMP domain; sequence RRITRPLAELQKELEARTADNLTPIAIHSATLEIEAVVSALNDLVSRLTSTLD. Residues 89–363 lie on the Cytoplasmic side of the membrane; it reads RRITRPLAEL…KKDQYVANQI (275 aa). The 209-residue stretch at 149 to 357 folds into the Histidine kinase domain; that stretch reads DVAHELRTPL…RAWVRLKKDQ (209 aa). H152 bears the Phosphohistidine; by autocatalysis mark.

In terms of processing, autophosphorylated.

It localises to the cell inner membrane. It catalyses the reaction ATP + protein L-histidine = ADP + protein N-phospho-L-histidine.. In terms of biological role, member of the two-component regulatory system BasS/BasR Autophosphorylates and activates BasR by phosphorylation. The polypeptide is Sensor protein BasS (basS) (Escherichia coli (strain K12)).